The chain runs to 340 residues: 3-isopropylmalate dehydrogenase (340 aa).

Substrate is bound by residues arginine 88, arginine 98, arginine 122, and aspartate 212. Positions 212, 236, and 240 each coordinate Mg(2+). Position 272-284 (272-284 (GSAPDIAGQGIAD)) interacts with NAD(+).

Belongs to the isocitrate and isopropylmalate dehydrogenases family. LeuB type 2 subfamily. As to quaternary structure, homodimer. Mg(2+) is required as a cofactor. Mn(2+) serves as cofactor.

It is found in the cytoplasm. It carries out the reaction (2R,3S)-3-isopropylmalate + NAD(+) = 4-methyl-2-oxopentanoate + CO2 + NADH. The protein operates within amino-acid biosynthesis; L-leucine biosynthesis; L-leucine from 3-methyl-2-oxobutanoate: step 3/4. Catalyzes the oxidation of 3-carboxy-2-hydroxy-4-methylpentanoate (3-isopropylmalate) to 3-carboxy-4-methyl-2-oxopentanoate. The product decarboxylates to 4-methyl-2 oxopentanoate. The protein is 3-isopropylmalate dehydrogenase of Corynebacterium glutamicum (strain R).